The sequence spans 449 residues: MTHSSSNEHEKEDDRRASDDMMDRDDQNAKEEQDVSKDAPPVNPWDPSQFPDGGFKAWSVVAGGFCSLFCSFGWINCIGIFQQYYQSDYLRGYSSSTISWIASLELFILFAGGLVVGRVYDRYGPRYILLFGTFMHVFGLMMASLSTEYYQILLSQGICSPIGISCLFTPAVNCIATWFRKKRGLANGIVAAGSSLGGVIFPIMFDRLIPRVGFPWAMRIGAFLILFLLIIANLTVVSRIPPMPKPITAKQYLAPFQERTYLLTTIAAMIFVLGLFLPINYIQAQAVEFGMDPSLANYLIPILNAASLFGRTVPGFVADKIGPYNVHTFMCFFSSVVAFALWLPAASNAPIIVFAALYGFGSGAFVAILPTLIAQISDIKEIGLRIGMEFGVLSLPALVSNPIGGAFVAHDNGGYRSCQIWTGCITMLGAILFVVARISLGGPSLMKKV.

The segment covering 1–37 has biased composition (basic and acidic residues); that stretch reads MTHSSSNEHEKEDDRRASDDMMDRDDQNAKEEQDVSK. Residues 1–43 form a disordered region; the sequence is MTHSSSNEHEKEDDRRASDDMMDRDDQNAKEEQDVSKDAPPVN. Transmembrane regions (helical) follow at residues 61–81, 97–117, 127–147, 152–172, 185–205, and 212–232; these read VAGG…IGIF, TISW…LVVG, YILL…SLST, ILLS…TPAV, LANG…PIMF, and VGFP…LIIA. Asn-233 carries an N-linked (GlcNAc...) asparagine glycan. Helical transmembrane passes span 262-282, 298-318, 326-346, 349-369, 390-410, and 420-440; these read LLTT…INYI, YLIP…GFVA, VHTF…LPAA, APII…VAIL, FGVL…FVAH, and IWTG…RISL.

This sequence belongs to the major facilitator superfamily. Monocarboxylate porter (TC 2.A.1.13) family.

Its subcellular location is the cell membrane. It catalyses the reaction erythrostominone(in) = erythrostominone(out). The catalysed reaction is deoxyerythrostominone(in) = deoxyerythrostominone(out). It carries out the reaction epierythrostominol(in) = epierythrostominol(out). The enzyme catalyses deoxyerythrostominol(in) = deoxyerythrostominol(out). Functionally, MFS-type transporter that mediates the secretion of the 4 major naphthoquinone derivatives produced, erythrostominone (NQ1), deoxyerythrostominone (NQ2), epierythrostominol (NQ4), and deoxyerythrostominol (NQ5), as well as of 3 newly identified naphthoquinone derivatives termed NQ7, NQ8 and NQ9. The chain is MFS-type transporter 1 from Ophiocordyceps sp. (strain BCC 1869) (Entomopathogenic fungus).